The following is a 434-amino-acid chain: Solute carrier RCH1 (434 aa).

Residues 1-15 (MKTQYSLIRKIWAHS) are Cytoplasmic-facing. The chain crosses the membrane as a helical span at residues 16-36 (VTEFLKSQWFFICLAILIVIA). Topologically, residues 37–50 (RFAPNFARDGGLIK) are extracellular. Residues 51–71 (GQYSIGYGCVAWIFLQSGLGM) traverse the membrane as a helical segment. The Cytoplasmic portion of the chain corresponds to 72–87 (KSRSLMANMLNWRAHA). A helical membrane pass occupies residues 88–108 (TILVLSFLITSSIVYGFCCAV). Residues 109 to 118 (KAANDPKIDD) lie on the Extracellular side of the membrane. A helical transmembrane segment spans residues 119 to 139 (WVLIGLILTATCPTTVASNVI). Topologically, residues 140 to 149 (MTTNAGGNSL) are cytoplasmic. The chain crosses the membrane as a helical span at residues 150 to 170 (LCVCEVFIGNLLGAFITPALV). Residues 171 to 199 (QMFTNRAPFAYGNPATGNGIGALYGRVMK) lie on the Extracellular side of the membrane. Residues 200–220 (QVGLSVFVPLFVGQVIQNCFP) traverse the membrane as a helical segment. Topologically, residues 221–234 (KGTAYYLGFLKKYH) are cytoplasmic. A helical transmembrane segment spans residues 235–255 (IKIGSYMLLLIMFSSFSTAFY). Residues 256-264 (QDAFTSVSH) are Extracellular-facing. The helical transmembrane segment at 265–285 (VCIIFLCFFNLGIYIFFTGLS) threads the bilayer. At 286-327 (YLCARPWFILKLFPHEPIEGKSTRLYRYSYNIFRPFYYSKED) the chain is on the cytoplasmic side. Residues 328-348 (AICIMFCGPAKTAALGVSLIT) traverse the membrane as a helical segment. The Extracellular portion of the chain corresponds to 349–362 (SQYGDKKEHLGKLL). Residues 363 to 383 (VPLVLYQVEQVMTANFFVSLF) form a helical membrane-spanning segment. The Cytoplasmic segment spans residues 384–434 (KRWIQKDAQADGSESSCANENEEVDLEKIISIGTGENQSVLSNNVPYTQPR). Ser-425 carries the post-translational modification Phosphoserine.

The protein belongs to the bile acid:sodium symporter (BASS) (TC 2.A.28) family.

The protein localises to the cell membrane. Its subcellular location is the bud neck. Functionally, solute carrier protein that negatively regulates the cytosolic calcium homeostasis in response to high levels of extracellular calcium. The polypeptide is Solute carrier RCH1 (Saccharomyces cerevisiae (strain ATCC 204508 / S288c) (Baker's yeast)).